The following is a 311-amino-acid chain: Glycine-betaine-binding protein (311 aa).

The N-terminal stretch at methionine 1 to alanine 23 is a signal peptide.

Belongs to the OsmX family.

Its subcellular location is the periplasm. In terms of biological role, binds glycine-betaine. This is Glycine-betaine-binding protein from Pseudomonas aeruginosa (strain ATCC 15692 / DSM 22644 / CIP 104116 / JCM 14847 / LMG 12228 / 1C / PRS 101 / PAO1).